Consider the following 809-residue polypeptide: DNA replication helicase (809 aa).

72–79 (GTAGAGKS) lines the ATP pocket.

The protein belongs to the herpesviridae helicase family. In terms of assembly, associates with the primase and the primase-associated factor to form the helicase-primase complex.

The protein localises to the host nucleus. Functionally, component of the helicase/primase complex. Unwinds the DNA at the replication forks and generates single-stranded DNA for both leading and lagging strand synthesis. The primase synthesizes short RNA primers on the lagging strand that the polymerase elongates using dNTPs. Possesses helicase-like motifs and therefore may act as the helicase subunit of the complex. In Epstein-Barr virus (strain B95-8) (HHV-4), this protein is DNA replication helicase.